The sequence spans 305 residues: NAD kinase 2 (305 aa).

Aspartate 78 (proton acceptor) is an active-site residue. Residues 78 to 79, 152 to 153, aspartate 182, 193 to 198, and asparagine 251 each bind NAD(+); these read DG, NE, and TAYSLS.

Belongs to the NAD kinase family. Requires a divalent metal cation as cofactor.

The protein resides in the cytoplasm. The catalysed reaction is NAD(+) + ATP = ADP + NADP(+) + H(+). In terms of biological role, involved in the regulation of the intracellular balance of NAD and NADP, and is a key enzyme in the biosynthesis of NADP. Catalyzes specifically the phosphorylation on 2'-hydroxyl of the adenosine moiety of NAD to yield NADP. The protein is NAD kinase 2 of Synechococcus sp. (strain ATCC 27144 / PCC 6301 / SAUG 1402/1) (Anacystis nidulans).